The sequence spans 400 residues: 3-phenylpropionate/cinnamic acid dioxygenase ferredoxin--NAD(+) reductase component (400 aa).

Position 5 to 36 (5 to 36 (TIIIVGGGQAAAMAAASLRQQGFTGELHLFSD)) interacts with FAD. 146–174 (SVVIVGAGTIGLELAASATQRGCKVTVIE) contacts NAD(+).

Belongs to the bacterial ring-hydroxylating dioxygenase ferredoxin reductase family. In terms of assembly, this dioxygenase system consists of four proteins: the two subunits of the hydroxylase component (HcaE and HcaF), a ferredoxin (HcaC) and a ferredoxin reductase (HcaD). The cofactor is FAD.

The catalysed reaction is 2 reduced [2Fe-2S]-[ferredoxin] + NAD(+) + H(+) = 2 oxidized [2Fe-2S]-[ferredoxin] + NADH. It participates in aromatic compound metabolism; 3-phenylpropanoate degradation. Part of the multicomponent 3-phenylpropionate dioxygenase, that converts 3-phenylpropionic acid (PP) and cinnamic acid (CI) into 3-phenylpropionate-dihydrodiol (PP-dihydrodiol) and cinnamic acid-dihydrodiol (CI-dihydrodiol), respectively. The sequence is that of 3-phenylpropionate/cinnamic acid dioxygenase ferredoxin--NAD(+) reductase component from Escherichia coli O17:K52:H18 (strain UMN026 / ExPEC).